We begin with the raw amino-acid sequence, 114 residues long: Large ribosomal subunit protein bL19 (114 aa).

This sequence belongs to the bacterial ribosomal protein bL19 family.

In terms of biological role, this protein is located at the 30S-50S ribosomal subunit interface and may play a role in the structure and function of the aminoacyl-tRNA binding site. In Acetivibrio thermocellus (strain ATCC 27405 / DSM 1237 / JCM 9322 / NBRC 103400 / NCIMB 10682 / NRRL B-4536 / VPI 7372) (Clostridium thermocellum), this protein is Large ribosomal subunit protein bL19.